A 263-amino-acid chain; its full sequence is Hemophilin (263 aa).

An N-terminal signal peptide occupies residues 1–20 (MKISQLFLGLVACSTAFAYA). Heme b is bound by residues H42, Y58, S104, and H105.

As to quaternary structure, monomer in solution. Interacts with host hemoglobin.

The protein localises to the secreted. In terms of biological role, part of a high affinity heme acquisition system. Functions as a hemophore that acquires heme from human hemoglobin and delivers the heme to its cognate receptor, HphR, facilitating transport of heme across the bacterial outer membrane. Apo HphA interacts specifically with human hemoglobin and steals heme through a passive process probably due to its high affinity for heme. It can also acquire heme complexed to human serum albumin. Plays a supporting role for full virulence, acting as an accessory factor that enhances the process of heme uptake. This chain is Hemophilin, found in Acinetobacter baumannii.